The primary structure comprises 120 residues: Ribonuclease P protein component 4 (120 aa).

Residues Cys-67, Cys-70, Cys-96, and Cys-99 each contribute to the Zn(2+) site.

Belongs to the eukaryotic/archaeal RNase P protein component 4 family. As to quaternary structure, consists of a catalytic RNA component and at least 4-5 protein subunits. Requires Zn(2+) as cofactor.

It localises to the cytoplasm. It catalyses the reaction Endonucleolytic cleavage of RNA, removing 5'-extranucleotides from tRNA precursor.. In terms of biological role, part of ribonuclease P, a protein complex that generates mature tRNA molecules by cleaving their 5'-ends. This Thermococcus sibiricus (strain DSM 12597 / MM 739) protein is Ribonuclease P protein component 4.